The primary structure comprises 344 residues: Fructose-1,6-bisphosphatase class 1 (344 aa).

Residues Glu-107, Asp-129, Leu-131, and Asp-132 each contribute to the Mg(2+) site. 3 residues coordinate substrate: Asn-224, Tyr-252, and Lys-282. Position 288 (Glu-288) interacts with Mg(2+).

This sequence belongs to the FBPase class 1 family. As to quaternary structure, homotetramer. It depends on Mg(2+) as a cofactor.

It is found in the cytoplasm. It catalyses the reaction beta-D-fructose 1,6-bisphosphate + H2O = beta-D-fructose 6-phosphate + phosphate. It functions in the pathway carbohydrate biosynthesis; Calvin cycle. The chain is Fructose-1,6-bisphosphatase class 1 from Synechococcus sp. (strain ATCC 27144 / PCC 6301 / SAUG 1402/1) (Anacystis nidulans).